A 178-amino-acid chain; its full sequence is ATP synthase subunit delta (178 aa).

The protein belongs to the ATPase delta chain family. As to quaternary structure, F-type ATPases have 2 components, F(1) - the catalytic core - and F(0) - the membrane proton channel. F(1) has five subunits: alpha(3), beta(3), gamma(1), delta(1), epsilon(1). F(0) has three main subunits: a(1), b(2) and c(10-14). The alpha and beta chains form an alternating ring which encloses part of the gamma chain. F(1) is attached to F(0) by a central stalk formed by the gamma and epsilon chains, while a peripheral stalk is formed by the delta and b chains.

It is found in the cell inner membrane. Its function is as follows. F(1)F(0) ATP synthase produces ATP from ADP in the presence of a proton or sodium gradient. F-type ATPases consist of two structural domains, F(1) containing the extramembraneous catalytic core and F(0) containing the membrane proton channel, linked together by a central stalk and a peripheral stalk. During catalysis, ATP synthesis in the catalytic domain of F(1) is coupled via a rotary mechanism of the central stalk subunits to proton translocation. This protein is part of the stalk that links CF(0) to CF(1). It either transmits conformational changes from CF(0) to CF(1) or is implicated in proton conduction. In Pseudomonas syringae pv. syringae (strain B728a), this protein is ATP synthase subunit delta.